The following is a 197-amino-acid chain: Phosphoheptose isomerase (197 aa).

In terms of domain architecture, SIS spans 34-196 (MVHCLLGGNK…DRTLFPQDEQ (163 aa)). Residue 49 to 51 (NGG) participates in substrate binding. Positions 58 and 62 each coordinate Zn(2+). Residues glutamate 62, 91–92 (ND), 117–119 (STS), serine 122, and glutamine 172 contribute to the substrate site. Positions 172 and 180 each coordinate Zn(2+).

The protein belongs to the SIS family. GmhA subfamily. In terms of assembly, homotetramer. It depends on Zn(2+) as a cofactor.

The protein localises to the cytoplasm. It catalyses the reaction 2 D-sedoheptulose 7-phosphate = D-glycero-alpha-D-manno-heptose 7-phosphate + D-glycero-beta-D-manno-heptose 7-phosphate. It participates in carbohydrate biosynthesis; D-glycero-D-manno-heptose 7-phosphate biosynthesis; D-glycero-alpha-D-manno-heptose 7-phosphate and D-glycero-beta-D-manno-heptose 7-phosphate from sedoheptulose 7-phosphate: step 1/1. In terms of biological role, catalyzes the isomerization of sedoheptulose 7-phosphate in D-glycero-D-manno-heptose 7-phosphate. The chain is Phosphoheptose isomerase from Shewanella baltica (strain OS223).